Consider the following 657-residue polypeptide: Oleate activated transcription factor 3 (657 aa).

The zn(2)-C6 fungal-type DNA-binding region spans 21-48 (CLNCRRRKTKCDRGKPSCSNCLKLGETC).

This sequence belongs to the OAF3 family.

The protein localises to the cytoplasm. The protein resides in the nucleus. It localises to the mitochondrion. In terms of biological role, transcriptional inhibitor with a significantly increased number of target genes in response to oleate. This Kluyveromyces lactis (strain ATCC 8585 / CBS 2359 / DSM 70799 / NBRC 1267 / NRRL Y-1140 / WM37) (Yeast) protein is Oleate activated transcription factor 3 (OAF3).